The sequence spans 339 residues: Aspartate carbamoyltransferase catalytic subunit (339 aa).

Positions 59 and 60 each coordinate carbamoyl phosphate. An L-aspartate-binding site is contributed by K87. R109, H142, and Q145 together coordinate carbamoyl phosphate. The L-aspartate site is built by R182 and R253. Positions 294 and 295 each coordinate carbamoyl phosphate.

The protein belongs to the aspartate/ornithine carbamoyltransferase superfamily. ATCase family. Heterododecamer (2C3:3R2) of six catalytic PyrB chains organized as two trimers (C3), and six regulatory PyrI chains organized as three dimers (R2).

It carries out the reaction carbamoyl phosphate + L-aspartate = N-carbamoyl-L-aspartate + phosphate + H(+). It functions in the pathway pyrimidine metabolism; UMP biosynthesis via de novo pathway; (S)-dihydroorotate from bicarbonate: step 2/3. Catalyzes the condensation of carbamoyl phosphate and aspartate to form carbamoyl aspartate and inorganic phosphate, the committed step in the de novo pyrimidine nucleotide biosynthesis pathway. The sequence is that of Aspartate carbamoyltransferase catalytic subunit from Prochlorococcus marinus (strain NATL1A).